Consider the following 290-residue polypeptide: UPF0761 membrane protein YihY (290 aa).

6 helical membrane-spanning segments follow: residues leucine 44–phenylalanine 64, valine 104–leucine 124, phenylalanine 140–isoleucine 160, isoleucine 183–isoleucine 203, alanine 210–leucine 230, and valine 244–leucine 264.

It belongs to the UPF0761 family.

The protein resides in the cell inner membrane. This is UPF0761 membrane protein YihY from Shigella sonnei (strain Ss046).